Consider the following 1976-residue polypeptide: Protein TIC 214 (1976 aa).

6 helical membrane passes run 11–31 (LLLL…YYGF), 64–84 (FIMG…HLAL), 87–107 (PHTL…FFWN), 126–146 (LSIQ…HFVL), 173–193 (FFGW…VLSW), and 221–241 (IFSI…PSPI). A compositionally biased stretch (acidic residues) spans 619 to 635 (FEEEEEEEEEDDQEEST). 2 disordered regions span residues 619–642 (FEEE…GIRS) and 830–861 (SSYV…EDKR). Residues 836–861 (GAKEKEKIEEEHEEEKGEYKRKEDKR) show a composition bias toward basic and acidic residues. A run of 2 helical transmembrane segments spans residues 1054–1074 (IIKI…FFVL) and 1202–1222 (IYMS…QFFL). Basic and acidic residues predominate over residues 1633-1665 (QKERFHPKPKVESNQKGYLELENRNRDEKERQH). Residues 1633 to 1669 (QKERFHPKPKVESNQKGYLELENRNRDEKERQHQGNL) form a disordered region.

It belongs to the TIC214 family. As to quaternary structure, part of the Tic complex.

The protein localises to the plastid. Its subcellular location is the chloroplast inner membrane. In terms of biological role, involved in protein precursor import into chloroplasts. May be part of an intermediate translocation complex acting as a protein-conducting channel at the inner envelope. In Nymphaea alba (White water-lily), this protein is Protein TIC 214.